Reading from the N-terminus, the 242-residue chain is UPF0246 protein SPD_1378 (242 aa).

It belongs to the UPF0246 family.

The polypeptide is UPF0246 protein SPD_1378 (Streptococcus pneumoniae serotype 2 (strain D39 / NCTC 7466)).